The sequence spans 360 residues: Phosphoserine aminotransferase (360 aa).

Residue arginine 42 participates in L-glutamate binding. Pyridoxal 5'-phosphate-binding residues include tryptophan 102, threonine 152, aspartate 171, and glutamine 194. Lysine 195 bears the N6-(pyridoxal phosphate)lysine mark. 237–238 (NT) contributes to the pyridoxal 5'-phosphate binding site.

It belongs to the class-V pyridoxal-phosphate-dependent aminotransferase family. SerC subfamily. As to quaternary structure, homodimer. Requires pyridoxal 5'-phosphate as cofactor.

The protein localises to the cytoplasm. The catalysed reaction is O-phospho-L-serine + 2-oxoglutarate = 3-phosphooxypyruvate + L-glutamate. It carries out the reaction 4-(phosphooxy)-L-threonine + 2-oxoglutarate = (R)-3-hydroxy-2-oxo-4-phosphooxybutanoate + L-glutamate. It functions in the pathway amino-acid biosynthesis; L-serine biosynthesis; L-serine from 3-phospho-D-glycerate: step 2/3. Its pathway is cofactor biosynthesis; pyridoxine 5'-phosphate biosynthesis; pyridoxine 5'-phosphate from D-erythrose 4-phosphate: step 3/5. Functionally, catalyzes the reversible conversion of 3-phosphohydroxypyruvate to phosphoserine and of 3-hydroxy-2-oxo-4-phosphonooxybutanoate to phosphohydroxythreonine. This Coxiella burnetii (strain RSA 331 / Henzerling II) protein is Phosphoserine aminotransferase.